The sequence spans 62 residues: Protein DsrB (62 aa).

The protein belongs to the DsrB family.

The chain is Protein DsrB from Enterobacter sp. (strain 638).